The chain runs to 372 residues: Queuine tRNA-ribosyltransferase (372 aa).

Asp-92 acts as the Proton acceptor in catalysis. Substrate-binding positions include 92-96 (DSGGF), Asp-146, Gln-188, and Gly-215. Positions 246-252 (GIGTLRE) are RNA binding. The Nucleophile role is filled by Asp-265. Residues 270–274 (TRLGR) are RNA binding; important for wobble base 34 recognition. Residues Cys-303, Cys-305, Cys-308, and His-334 each coordinate Zn(2+).

This sequence belongs to the queuine tRNA-ribosyltransferase family. In terms of assembly, homodimer. Within each dimer, one monomer is responsible for RNA recognition and catalysis, while the other monomer binds to the replacement base PreQ1. It depends on Zn(2+) as a cofactor.

The catalysed reaction is 7-aminomethyl-7-carbaguanine + guanosine(34) in tRNA = 7-aminomethyl-7-carbaguanosine(34) in tRNA + guanine. Its pathway is tRNA modification; tRNA-queuosine biosynthesis. Catalyzes the base-exchange of a guanine (G) residue with the queuine precursor 7-aminomethyl-7-deazaguanine (PreQ1) at position 34 (anticodon wobble position) in tRNAs with GU(N) anticodons (tRNA-Asp, -Asn, -His and -Tyr). Catalysis occurs through a double-displacement mechanism. The nucleophile active site attacks the C1' of nucleotide 34 to detach the guanine base from the RNA, forming a covalent enzyme-RNA intermediate. The proton acceptor active site deprotonates the incoming PreQ1, allowing a nucleophilic attack on the C1' of the ribose to form the product. After dissociation, two additional enzymatic reactions on the tRNA convert PreQ1 to queuine (Q), resulting in the hypermodified nucleoside queuosine (7-(((4,5-cis-dihydroxy-2-cyclopenten-1-yl)amino)methyl)-7-deazaguanosine). The chain is Queuine tRNA-ribosyltransferase from Prochlorococcus marinus (strain MIT 9303).